Reading from the N-terminus, the 436-residue chain is 5-methylthioadenosine/S-adenosylhomocysteine deaminase (436 aa).

Residues histidine 66 and histidine 68 each contribute to the Zn(2+) site. Substrate-binding residues include glutamate 95, arginine 147, arginine 161, and histidine 187. Histidine 214 is a binding site for Zn(2+). Substrate is bound by residues glutamate 217 and aspartate 303. Position 303 (aspartate 303) interacts with Zn(2+).

The protein belongs to the metallo-dependent hydrolases superfamily. MTA/SAH deaminase family. Requires Zn(2+) as cofactor.

The enzyme catalyses S-adenosyl-L-homocysteine + H2O + H(+) = S-inosyl-L-homocysteine + NH4(+). It carries out the reaction S-methyl-5'-thioadenosine + H2O + H(+) = S-methyl-5'-thioinosine + NH4(+). In terms of biological role, catalyzes the deamination of 5-methylthioadenosine and S-adenosyl-L-homocysteine into 5-methylthioinosine and S-inosyl-L-homocysteine, respectively. Is also able to deaminate adenosine. The chain is 5-methylthioadenosine/S-adenosylhomocysteine deaminase from Symbiobacterium thermophilum (strain DSM 24528 / JCM 14929 / IAM 14863 / T).